We begin with the raw amino-acid sequence, 118 residues long: UPF0148 protein LS215_1455 (118 aa).

It belongs to the UPF0148 family.

The polypeptide is UPF0148 protein LS215_1455 (Saccharolobus islandicus (strain L.S.2.15 / Lassen #1) (Sulfolobus islandicus)).